The chain runs to 427 residues: Chitin disaccharide deacetylase (427 aa).

An N-terminal signal peptide occupies residues 1 to 22 (MKLNKLAIATLVSAALSQYAFA). The region spanning 28 to 326 (GTIYLTFDDG…LAKQAGYVFD (299 aa)) is the NodB homology domain. 2 consecutive Chitin-binding type-3 domains span residues 333 to 375 (PNWQ…SSLW) and 382 to 419 (TNWT…TPNS).

It belongs to the polysaccharide deacetylase family. Carbohydrate-binding module 12 subfamily.

The enzyme catalyses N,N'-diacetylchitobiose + H2O = N-acetyl-beta-D-glucosaminyl-(1-&gt;4)-D-glucosamine + acetate. It participates in glycan degradation; chitin degradation. In terms of biological role, specifically catalyzes the degradation of N,N'-diacetylchitobiose. Key enzyme in the chitin catabolic cascade. The sequence is that of Chitin disaccharide deacetylase (deaA) from Vibrio alginolyticus.